The following is a 307-amino-acid chain: Serine/threonine-protein phosphatase 4 catalytic subunit B (307 aa).

Residues Asp54, His56, Asp82, and Asn114 each coordinate Mn(2+). Catalysis depends on His115, which acts as the Proton donor. Residues His164 and His238 each coordinate Mn(2+). Leu307 is modified (leucine methyl ester).

It belongs to the PPP phosphatase family. PP-4 (PP-X) subfamily. As to quaternary structure, serine/threonine-protein phosphatase 4 (PP4) occurs in different assemblies of the catalytic and one or more regulatory subunits. Requires Mn(2+) as cofactor.

Its subcellular location is the cytoplasm. It is found in the cytoskeleton. The protein localises to the microtubule organizing center. It localises to the centrosome. The catalysed reaction is O-phospho-L-seryl-[protein] + H2O = L-seryl-[protein] + phosphate. It catalyses the reaction O-phospho-L-threonyl-[protein] + H2O = L-threonyl-[protein] + phosphate. Its function is as follows. Protein phosphatase that regulates many processes such as microtubule organization at centrosomes. The sequence is that of Serine/threonine-protein phosphatase 4 catalytic subunit B (ppp4cb) from Danio rerio (Zebrafish).